Reading from the N-terminus, the 398-residue chain is Chalcone synthase 1 (398 aa).

58–65 (KFKRMCDK) contacts CoA. Catalysis depends on cysteine 167, which acts as the Acyl-thioester intermediate. Residues threonine 200 and 219 to 220 (GD) each bind substrate. CoA is bound at residue alanine 311.

This sequence belongs to the thiolase-like superfamily. Chalcone/stilbene synthases family. In terms of assembly, homodimer.

It catalyses the reaction (E)-4-coumaroyl-CoA + 3 malonyl-CoA + 3 H(+) = 2',4,4',6'-tetrahydroxychalcone + 3 CO2 + 4 CoA. It participates in secondary metabolite biosynthesis; flavonoid biosynthesis. Its function is as follows. The primary product of this enzyme is 4,2',4',6'-tetrahydroxychalcone (also termed naringenin-chalcone or chalcone) which can under specific conditions spontaneously isomerize into naringenin. This chain is Chalcone synthase 1 (CHS1), found in Oryza sativa subsp. japonica (Rice).